A 427-amino-acid chain; its full sequence is 3-deoxy-D-manno-octulosonic acid transferase (427 aa).

The chain crosses the membrane as a helical; Signal-anchor span at residues 4-24; the sequence is FFYTSLLLICQPLILCFIGLL. The active-site Proton acceptor is the Glu62. CMP is bound by residues 270–271, 311–313, and 337–340; these read PR, MGE, and NPLE.

This sequence belongs to the glycosyltransferase group 1 family. Glycosyltransferase 30 subfamily.

The protein localises to the cell inner membrane. The catalysed reaction is lipid IVA (E. coli) + CMP-3-deoxy-beta-D-manno-octulosonate = alpha-Kdo-(2-&gt;6)-lipid IVA (E. coli) + CMP + H(+). Its pathway is bacterial outer membrane biogenesis; LPS core biosynthesis. Functionally, involved in lipopolysaccharide (LPS) biosynthesis. Catalyzes the transfer of a single 3-deoxy-D-manno-octulosonate (Kdo) residue from CMP-Kdo to lipid IV(A), the tetraacyldisaccharide-1,4'-bisphosphate precursor of lipid A. Is strictly monofunctional, i.e. is capable of adding only a single Kdo residue to the acceptor lipid. In Haemophilus influenzae (strain ATCC 51907 / DSM 11121 / KW20 / Rd), this protein is 3-deoxy-D-manno-octulosonic acid transferase (waaA).